Here is a 313-residue protein sequence, read N- to C-terminus: Small ribosomal subunit biogenesis GTPase RsgA (313 aa).

The 154-residue stretch at 82 to 235 folds into the CP-type G domain; sequence REKLIAANAT…IIDSPGIQQF (154 aa). GTP is bound by residues 127-130 and 177-185; these read NKTD and GQSGMGKST. Positions 259, 264, 266, and 272 each coordinate Zn(2+).

This sequence belongs to the TRAFAC class YlqF/YawG GTPase family. RsgA subfamily. As to quaternary structure, monomer. Associates with 30S ribosomal subunit, binds 16S rRNA. Requires Zn(2+) as cofactor.

Its subcellular location is the cytoplasm. One of several proteins that assist in the late maturation steps of the functional core of the 30S ribosomal subunit. Helps release RbfA from mature subunits. May play a role in the assembly of ribosomal proteins into the subunit. Circularly permuted GTPase that catalyzes slow GTP hydrolysis, GTPase activity is stimulated by the 30S ribosomal subunit. The sequence is that of Small ribosomal subunit biogenesis GTPase RsgA from Nitrosospira multiformis (strain ATCC 25196 / NCIMB 11849 / C 71).